A 179-amino-acid polypeptide reads, in one-letter code: Ribosome maturation factor RimM (179 aa).

One can recognise a PRC barrel domain in the interval 102-173 (PEEYHYRDLI…ALHVQPPPGL (72 aa)).

Belongs to the RimM family. As to quaternary structure, binds ribosomal protein uS19.

The protein localises to the cytoplasm. Functionally, an accessory protein needed during the final step in the assembly of 30S ribosomal subunit, possibly for assembly of the head region. Essential for efficient processing of 16S rRNA. May be needed both before and after RbfA during the maturation of 16S rRNA. It has affinity for free ribosomal 30S subunits but not for 70S ribosomes. The sequence is that of Ribosome maturation factor RimM from Synechococcus sp. (strain JA-2-3B'a(2-13)) (Cyanobacteria bacterium Yellowstone B-Prime).